The chain runs to 173 residues: Bifunctional protein PyrR (173 aa).

Positions 93–105 (VILVDDVLYTGRT) match the PRPP-binding motif.

This sequence belongs to the purine/pyrimidine phosphoribosyltransferase family. PyrR subfamily. As to quaternary structure, homodimer and homohexamer; in equilibrium.

The enzyme catalyses UMP + diphosphate = 5-phospho-alpha-D-ribose 1-diphosphate + uracil. Regulates transcriptional attenuation of the pyrimidine nucleotide (pyr) operon by binding in a uridine-dependent manner to specific sites on pyr mRNA. This disrupts an antiterminator hairpin in the RNA and favors formation of a downstream transcription terminator, leading to a reduced expression of downstream genes. In terms of biological role, also displays a weak uracil phosphoribosyltransferase activity which is not physiologically significant. The protein is Bifunctional protein PyrR of Streptococcus thermophilus (strain CNRZ 1066).